The following is a 215-amino-acid chain: Peroxiredoxin-5, mitochondrial (215 aa).

The N-terminal 53 residues, 1–53 (MGLAGVCVLRRSAGYILGGAARQSVAATAAARRRSEGGWASGGVRSFSRAAAA), are a transit peptide targeting the mitochondrion. The Thioredoxin domain maps to 57 to 215 (IKVGDAIPAV…SLAPSIISQL (159 aa)). Lysine 76 carries the N6-acetyllysine modification. The residue at position 84 (lysine 84) is an N6-acetyllysine; alternate. Residue lysine 84 is modified to N6-succinyllysine; alternate. Catalysis depends on cysteine 101, which acts as the Cysteine sulfenic acid (-SOH) intermediate. Residue cysteine 101 is the site of S-palmitoyl cysteine attachment. The cysteines at positions 101 and 205 are disulfide-linked. Lysine 117 carries the N6-succinyllysine modification. Phosphoserine is present on residues serine 172 and serine 183. The Microbody targeting signal motif lies at 213–215 (SQL).

This sequence belongs to the peroxiredoxin family. Prx5 subfamily. Monomer. In terms of processing, S-palmitoylated. Palmitoylation occurs on the active site, inhibiting its reactivity; therefore PRDX5 palmitoylation status determines its antioxidant capacity. S-palmitoylated. Depalmitoylated by ABHD10.

The protein localises to the mitochondrion. It is found in the cytoplasm. The protein resides in the peroxisome matrix. The enzyme catalyses a hydroperoxide + [thioredoxin]-dithiol = an alcohol + [thioredoxin]-disulfide + H2O. Its function is as follows. Thiol-specific peroxidase that catalyzes the reduction of hydrogen peroxide and organic hydroperoxides to water and alcohols, respectively. Plays a role in cell protection against oxidative stress by detoxifying peroxides and as sensor of hydrogen peroxide-mediated signaling events. The polypeptide is Peroxiredoxin-5, mitochondrial (PRDX5) (Chlorocebus aethiops (Green monkey)).